Here is a 236-residue protein sequence, read N- to C-terminus: LexA repressor (236 aa).

The disordered stretch occupies residues Met1–Ser25. The H-T-H motif DNA-binding region spans Ile51–Arg71. Active-site for autocatalytic cleavage activity residues include Ser160 and Lys197.

The protein belongs to the peptidase S24 family. Homodimer.

It carries out the reaction Hydrolysis of Ala-|-Gly bond in repressor LexA.. Its function is as follows. Represses a number of genes involved in the response to DNA damage (SOS response), including recA and lexA. In the presence of single-stranded DNA, RecA interacts with LexA causing an autocatalytic cleavage which disrupts the DNA-binding part of LexA, leading to derepression of the SOS regulon and eventually DNA repair. In Mycobacterium bovis (strain BCG / Pasteur 1173P2), this protein is LexA repressor.